Consider the following 443-residue polypeptide: Spermidine hydroxycinnamoyltransferase 1 (443 aa).

Catalysis depends on proton acceptor residues histidine 167 and aspartate 390.

This sequence belongs to the plant acyltransferase family.

Its function is as follows. Hydroxycinnamoyl transferase that catalyzes the transfer of an acyl from p-coumaryol-CoA to spermidine, to produce coumaroyl spermidine. Can use feruloyl-CoA as acyl donor. Contributes to the natural variation of spermidine-based phenolamides in rice cultivars. The polypeptide is Spermidine hydroxycinnamoyltransferase 1 (Oryza sativa subsp. japonica (Rice)).